The sequence spans 208 residues: 2-phospho-L-lactate guanylyltransferase (208 aa).

The protein belongs to the CofC family. As to quaternary structure, homodimer.

It carries out the reaction (2S)-2-phospholactate + GTP + H(+) = (2S)-lactyl-2-diphospho-5'-guanosine + diphosphate. It functions in the pathway cofactor biosynthesis; coenzyme F420 biosynthesis. Guanylyltransferase that catalyzes the activation of (2S)-2-phospholactate (2-PL) as (2S)-lactyl-2-diphospho-5'-guanosine, via the condensation of 2-PL with GTP. It is involved in the biosynthesis of coenzyme F420, a hydride carrier cofactor. This is 2-phospho-L-lactate guanylyltransferase from Haloarcula marismortui (strain ATCC 43049 / DSM 3752 / JCM 8966 / VKM B-1809) (Halobacterium marismortui).